The chain runs to 120 residues: Ig heavy chain V region 36-65 (120 aa).

The Ig-like domain occupies 1–111; sequence VQLQQSGAEL…GGSYYFDYWG (111 aa).

This Mus musculus (Mouse) protein is Ig heavy chain V region 36-65.